A 270-amino-acid chain; its full sequence is 4-hydroxy-tetrahydrodipicolinate reductase (270 aa).

NAD(+) is bound by residues 11-16 and glutamate 37; that span reads GASGRM. Arginine 38 contacts NADP(+). NAD(+)-binding positions include 101 to 103 and 125 to 128; these read GTT and SPNM. Histidine 158 serves as the catalytic Proton donor/acceptor. Histidine 159 contacts (S)-2,3,4,5-tetrahydrodipicolinate. The active-site Proton donor is lysine 162. 168 to 169 contributes to the (S)-2,3,4,5-tetrahydrodipicolinate binding site; the sequence is GT.

The protein belongs to the DapB family.

The protein localises to the cytoplasm. It catalyses the reaction (S)-2,3,4,5-tetrahydrodipicolinate + NAD(+) + H2O = (2S,4S)-4-hydroxy-2,3,4,5-tetrahydrodipicolinate + NADH + H(+). It carries out the reaction (S)-2,3,4,5-tetrahydrodipicolinate + NADP(+) + H2O = (2S,4S)-4-hydroxy-2,3,4,5-tetrahydrodipicolinate + NADPH + H(+). The protein operates within amino-acid biosynthesis; L-lysine biosynthesis via DAP pathway; (S)-tetrahydrodipicolinate from L-aspartate: step 4/4. In terms of biological role, catalyzes the conversion of 4-hydroxy-tetrahydrodipicolinate (HTPA) to tetrahydrodipicolinate. In Shewanella denitrificans (strain OS217 / ATCC BAA-1090 / DSM 15013), this protein is 4-hydroxy-tetrahydrodipicolinate reductase.